Consider the following 327-residue polypeptide: Beta-ketoacyl-[acyl-carrier-protein] synthase III 2 (327 aa).

Active-site residues include C114 and H251. Positions 252–256 are ACP-binding; that stretch reads SANLR. N281 is a catalytic residue.

The protein belongs to the thiolase-like superfamily. FabH family. In terms of assembly, homodimer.

It localises to the cytoplasm. It catalyses the reaction malonyl-[ACP] + acetyl-CoA + H(+) = 3-oxobutanoyl-[ACP] + CO2 + CoA. It functions in the pathway lipid metabolism; fatty acid biosynthesis. Catalyzes the condensation reaction of fatty acid synthesis by the addition to an acyl acceptor of two carbons from malonyl-ACP. Catalyzes the first condensation reaction which initiates fatty acid synthesis and may therefore play a role in governing the total rate of fatty acid production. Possesses both acetoacetyl-ACP synthase and acetyl transacylase activities. Its substrate specificity determines the biosynthesis of branched-chain and/or straight-chain of fatty acids. This is Beta-ketoacyl-[acyl-carrier-protein] synthase III 2 from Bacillus anthracis.